An 81-amino-acid chain; its full sequence is Small ribosomal subunit protein bS16c (81 aa).

This sequence belongs to the bacterial ribosomal protein bS16 family.

The protein resides in the plastid. It localises to the chloroplast. The protein is Small ribosomal subunit protein bS16c of Emiliania huxleyi (Coccolithophore).